We begin with the raw amino-acid sequence, 213 residues long: Glycerol-3-phosphate acyltransferase (213 aa).

Helical transmembrane passes span 3–23 (ILLA…VVVS), 51–71 (KAAI…VWLA), 78–98 (DVAI…PVFF), 115–135 (AVHP…AFFF), and 140–160 (LAAL…FGMP).

Belongs to the PlsY family. In terms of assembly, probably interacts with PlsX.

The protein localises to the cell inner membrane. It carries out the reaction an acyl phosphate + sn-glycerol 3-phosphate = a 1-acyl-sn-glycero-3-phosphate + phosphate. Its pathway is lipid metabolism; phospholipid metabolism. Functionally, catalyzes the transfer of an acyl group from acyl-phosphate (acyl-PO(4)) to glycerol-3-phosphate (G3P) to form lysophosphatidic acid (LPA). This enzyme utilizes acyl-phosphate as fatty acyl donor, but not acyl-CoA or acyl-ACP. The sequence is that of Glycerol-3-phosphate acyltransferase from Burkholderia cenocepacia (strain HI2424).